Consider the following 818-residue polypeptide: Phosphoenolpyruvate synthase (818 aa).

His-442 acts as the Tele-phosphohistidine intermediate in catalysis. Arg-532, Arg-601, Glu-703, Gly-724, Ser-725, Asn-726, and Asp-727 together coordinate substrate. Glu-703 is a Mg(2+) binding site. Asp-727 is a binding site for Mg(2+). Cys-774 serves as the catalytic Proton donor.

It belongs to the PEP-utilizing enzyme family. Mg(2+) is required as a cofactor.

It catalyses the reaction pyruvate + ATP + H2O = phosphoenolpyruvate + AMP + phosphate + 2 H(+). It functions in the pathway carbohydrate biosynthesis; gluconeogenesis. In terms of biological role, catalyzes the phosphorylation of pyruvate to phosphoenolpyruvate. This chain is Phosphoenolpyruvate synthase (ppsA), found in Synechocystis sp. (strain ATCC 27184 / PCC 6803 / Kazusa).